The chain runs to 347 residues: Peroxidase C2 (347 aa).

Residues 1-24 form the signal peptide; the sequence is MHSSSSLIKLGFLLLLLNVSLSHA. 4 disulfides stabilise this stretch: C35–C115, C68–C73, C121–C325, and C201–C233. The active-site Proton acceptor is H66. Ca(2+) is bound by residues D67, V70, G72, D74, and S76. The N-linked (GlcNAc...) asparagine glycan is linked to N81. P163 serves as a coordination point for substrate. A heme b-binding site is contributed by H194. Position 195 (T195) interacts with Ca(2+). N-linked (GlcNAc...) asparagine glycosylation is found at N210 and N238. Ca(2+) contacts are provided by D246, T249, and D254.

This sequence belongs to the peroxidase family. Classical plant (class III) peroxidase subfamily. Ca(2+) serves as cofactor. Heme b is required as a cofactor.

The protein resides in the secreted. Its subcellular location is the vacuole. It catalyses the reaction 2 a phenolic donor + H2O2 = 2 a phenolic radical donor + 2 H2O. Functionally, removal of H(2)O(2), oxidation of toxic reductants, biosynthesis and degradation of lignin, suberization, auxin catabolism, response to environmental stresses such as wounding, pathogen attack and oxidative stress. These functions might be dependent on each isozyme/isoform in each plant tissue. The sequence is that of Peroxidase C2 (PRXC2) from Armoracia rusticana (Horseradish).